The sequence spans 310 residues: Polyprenyl transferase ntnF (310 aa).

Helical transmembrane passes span 30 to 50, 63 to 83, 110 to 130, 154 to 174, 185 to 205, 230 to 250, 255 to 275, and 286 to 306; these read HTPEGLSTASIGWLALFFYAI, FLGIFACYQITHGVFCMWNDI, AMVAFIIGLALSLGVTYAMLG, IWAPQAVLGLTMAACVLPPWV, LPASLFGAIFSWLVYLDLIYA, ACLTVLGALQIAFFAVAAFEA, FLWVFGIAVWAISVPWSILSL, and IFLVNAILGIYLAAVSGTDVW.

The protein belongs to the UbiA prenyltransferase family. Mg(2+) is required as a cofactor.

The protein localises to the membrane. Its pathway is secondary metabolite biosynthesis; terpenoid biosynthesis. Functionally, olyprenyl transferase; part of the gene cluster that mediates the biosynthesis of the meroterpenoids nectripenoids A and B, as well as cochliquninone D and isocochliquninone E. The pathway probably begins with the HR-PKS ntnH that catalyzes two chain-extension steps to form a reduced triketide, which then primes the SAT domain in the NR-PKS ntnG to initiate three more cycles of extension to give a linear hexaketide corresponding to the polyketide part of nectripenoids. The FAD-dependent monooxygenase ntnJ then performs an oxidative decarboxylation at C11 of the ntnH/ntnG product, via an electrophilic aromatic hydroxylation with concomitant ipso-decarboxylation. The membrane-bound polyprenyl transferase ntnF then introduces a farnesyl group before the FAD-dependent monooxygenase ntnK functions as the first epoxidase on terminal C12'-C13' olefin, followed by a second epoxidation on C7'-C8' catalyzed by ntnA. The terpene cyclase/mutase ntnI then initiates the sequential tricyclic ring formation through protonation of the terminal epoxide and catalyzes the regioselective and stereoselective 6/6/6-tricyclic ring formation. The cytochrome P450 monooxygenase ntnM may then hydroxylate C1'. The polypeptide is Polyprenyl transferase ntnF (Nectria sp).